A 58-amino-acid chain; its full sequence is Small ribosomal subunit protein bS21B (58 aa).

Belongs to the bacterial ribosomal protein bS21 family.

This chain is Small ribosomal subunit protein bS21B, found in Trichormus variabilis (strain ATCC 29413 / PCC 7937) (Anabaena variabilis).